We begin with the raw amino-acid sequence, 318 residues long: (1S)-1,7-diacetoxy-luvungin A aldo-keto reductase (318 aa).

The active-site Proton donor is the Tyr54.

This sequence belongs to the aldo/keto reductase family. In terms of tissue distribution, expressed in flowers, maturing fruits and in juice vesicles.

The enzyme catalyses (1S)-1,7-diacetoxy-luvungin A + AH2 + H2O = (1R,2R,3S,8R,10R,11R,15S,16S)-3-(acetyloxy)-15-[(4R)-4-[(2S)-3,3-dimethyloxiran-2-yl]-1,4-dihydroxybutan-2-yl]-2,7,7,11,16-pentamethyl-5-oxo-6-oxatetracyclo[9.7.0.0(2,8).0(12,16)]octadec-12-en-10-yl acetate + acetate + A + H(+). It functions in the pathway secondary metabolite biosynthesis; terpenoid biosynthesis. Its function is as follows. Aldo-keto reductase involved in the biosynthesis of limonoids triterpene natural products such as limonin, a compound with insecticidal activity responsible for the bitter taste in citrus. Can use (1S)-1,7-diacetoxy-luvungin A as substrate. The protein is (1S)-1,7-diacetoxy-luvungin A aldo-keto reductase of Citrus sinensis (Sweet orange).